A 289-amino-acid chain; its full sequence is Complement C1q tumor necrosis factor-related protein 7 (289 aa).

Residues 1-16 form the signal peptide; sequence MIVLLYVTSLAICASG. The disordered stretch occupies residues 36–134; it reads IPGLPGPPGP…GDRGDQGDPG (99 aa). A Collagen-like domain is found at 38–139; sequence GLPGPPGPPG…QGDPGLPGVC (102 aa). Low complexity predominate over residues 48-61; that stretch reads ANGSPGPHGRIGLP. The segment covering 63 to 76 has biased composition (basic and acidic residues); sequence RDGRDGRKGEKGEK. Positions 78-91 are enriched in low complexity; sequence TAGLKGKTGPLGLA. A compositionally biased stretch (basic and acidic residues) spans 93 to 102; the sequence is EKGDQGETGK. In terms of domain architecture, C1q spans 143-279; the sequence is SIVLKSAFSV…GFLLYVDTDY (137 aa).

Its subcellular location is the secreted. The chain is Complement C1q tumor necrosis factor-related protein 7 (C1qtnf7) from Mus musculus (Mouse).